Consider the following 536-residue polypeptide: Protein Rep68 (536 aa).

The region spanning 1–199 is the PV NS1-Nuc domain; sequence MPGFYEIVIK…AQHLTHVSQT (199 aa). Residues E83, H90, and H92 each contribute to the a divalent metal cation site. Positions 90 to 92 match the RCR-2 motif; sequence HMH. The active-site For nuclease activity is the Y156. Positions 156 to 160 match the RCR-3 motif; the sequence is YLLPK. Polar residues predominate over residues 196 to 211; that stretch reads VSQTQEQNKENQNPNS. The segment at 196–216 is disordered; the sequence is VSQTQEQNKENQNPNSDAPVI. One can recognise an SF3 helicase domain in the interval 308-463; the sequence is DPQYAASVFL…LDHDFGKVTK (156 aa). 334 to 341 serves as a coordination point for ATP; it reads GPATTGKT. Residues 488–536 are disordered; it reads KGGAKKRPAPSDADISEPKRVRESVAQPSTSDAEASINYADRLARGHSL.

In terms of assembly, interacts with host TOPORS. Interacts with host KCTD5. It depends on a divalent metal cation as a cofactor.

The protein resides in the host nucleus. The catalysed reaction is ATP + H2O = ADP + phosphate + H(+). In terms of biological role, plays an essential role in the initiation of viral DNA synthesis. Binds specifically to an inverted terminal repeat element (ITR) on the 3' and 5' ends of the viral DNA, where it cleaves a site specifically to generate a priming site for initiation of the synthesis of a complementary strand. Also plays a role as transcriptional regulator, DNA helicase and as key factor in site-specific integration of the viral genome. Inhibits the host cell cycle G1/S and G2/M transitions. These arrests may provide essential cellular factors for viral DNA replication. The polypeptide is Protein Rep68 (Rep68) (Mammalia (AAV-2)).